The chain runs to 648 residues: Macrolide export ATP-binding/permease protein MacB (648 aa).

The ABC transporter domain maps to 6 to 251; it reads IRVRGVSRAF…GPSAGWRGAI (246 aa). 42-49 provides a ligand contact to ATP; the sequence is GASGSGKS. A run of 4 helical transmembrane segments spans residues 273 to 293, 528 to 548, 572 to 592, and 613 to 633; these read LLTM…SALG, VAVI…LVSV, FLIE…MLAL, and SIIV…FLPA.

It belongs to the ABC transporter superfamily. Macrolide exporter (TC 3.A.1.122) family. In terms of assembly, homodimer.

The protein localises to the cell inner membrane. Its function is as follows. Non-canonical ABC transporter that contains transmembrane domains (TMD), which form a pore in the inner membrane, and an ATP-binding domain (NBD), which is responsible for energy generation. Confers resistance against macrolides. In Agrobacterium fabrum (strain C58 / ATCC 33970) (Agrobacterium tumefaciens (strain C58)), this protein is Macrolide export ATP-binding/permease protein MacB.